The chain runs to 363 residues: HAUS augmin-like complex subunit 4 (363 aa).

This sequence belongs to the HAUS4 family. Component of the HAUS augmin-like complex. The complex interacts with the gamma-tubulin ring complex and this interaction is required for spindle assembly. Interacts with EML3 (phosphorylated at 'Thr-881').

The protein resides in the cytoplasm. Its subcellular location is the cytoskeleton. The protein localises to the microtubule organizing center. It localises to the centrosome. It is found in the spindle. Functionally, contributes to mitotic spindle assembly, maintenance of centrosome integrity and completion of cytokinesis as part of the HAUS augmin-like complex. The polypeptide is HAUS augmin-like complex subunit 4 (HAUS4) (Homo sapiens (Human)).